A 555-amino-acid polypeptide reads, in one-letter code: Formate--tetrahydrofolate ligase (555 aa).

T63–T70 serves as a coordination point for ATP.

Belongs to the formate--tetrahydrofolate ligase family.

The catalysed reaction is (6S)-5,6,7,8-tetrahydrofolate + formate + ATP = (6R)-10-formyltetrahydrofolate + ADP + phosphate. It functions in the pathway one-carbon metabolism; tetrahydrofolate interconversion. In Beijerinckia indica subsp. indica (strain ATCC 9039 / DSM 1715 / NCIMB 8712), this protein is Formate--tetrahydrofolate ligase.